The following is a 176-amino-acid chain: Vitamin K epoxide reductase complex subunit 1-like protein 1 (176 aa).

Residues 1–13 lie on the Cytoplasmic side of the membrane; that stretch reads MAAPVLLRVSVPR. A helical transmembrane segment spans residues 14-36; that stretch reads WERVARYAVCAAGILLSIYAYHV. Topologically, residues 37–87 are lumenal; the sequence is EREKERDPEHRALCDLGPWVKCSAALASRWGRGFGLLGSIFGKDGVLNQPN. A disulfide bridge connects residues Cys50 and Cys58. Residue Asn87 participates in (S)-warfarin binding. A helical membrane pass occupies residues 88–102; it reads SVFGLIFYILQLLLG. Residues 103-107 are Cytoplasmic-facing; it reads MTASA. A helical membrane pass occupies residues 108 to 135; the sequence is VAALILMTSSIMSVVGSLYLAYILYFVL. The Lumenal portion of the chain corresponds to 136–138; the sequence is KEF. A disulfide bond links Cys139 and Cys142. The chain crosses the membrane as a helical span at residues 139–160; the sequence is CIICIVTYVLNFLLLIINYKRL. Phylloquinone-binding residues include Cys142 and Tyr146. A (S)-warfarin-binding site is contributed by Tyr146. The Cytoplasmic segment spans residues 161-176; that stretch reads VYLNEAWKRQLQPKQD.

This sequence belongs to the VKOR family.

It is found in the endoplasmic reticulum membrane. It carries out the reaction phylloquinone + [protein]-disulfide + H2O = 2,3-epoxyphylloquinone + [protein]-dithiol. The catalysed reaction is phylloquinol + [protein]-disulfide = phylloquinone + [protein]-dithiol. Inhibited by warfarin (coumadin). Warfarin locks VKORC1 in both redox states into the closed conformation. In terms of biological role, involved in vitamin K metabolism. Can reduce inactive vitamin K 2,3-epoxide to active vitamin K, and may contribute to vitamin K-mediated protection against oxidative stress. Plays a role in vitamin K-dependent gamma-carboxylation of Glu residues in target proteins. This chain is Vitamin K epoxide reductase complex subunit 1-like protein 1 (VKORC1L1), found in Homo sapiens (Human).